We begin with the raw amino-acid sequence, 525 residues long: GMP synthase [glutamine-hydrolyzing] (525 aa).

One can recognise a Glutamine amidotransferase type-1 domain in the interval 9–207; it reads RILILDFGSQ…VQDICGCEAL (199 aa). C86 acts as the Nucleophile in catalysis. Residues H181 and E183 contribute to the active site. A GMPS ATP-PPase domain is found at 208 to 400; that stretch reads WTASNIVEDA…LGLPYDMVYR (193 aa). An ATP-binding site is contributed by 235-241; that stretch reads SGGVDSS.

Homodimer.

The catalysed reaction is XMP + L-glutamine + ATP + H2O = GMP + L-glutamate + AMP + diphosphate + 2 H(+). It participates in purine metabolism; GMP biosynthesis; GMP from XMP (L-Gln route): step 1/1. Catalyzes the synthesis of GMP from XMP. This is GMP synthase [glutamine-hydrolyzing] from Pseudomonas putida (strain GB-1).